Consider the following 124-residue polypeptide: Desulfoferrodoxin homolog (124 aa).

Fe cation contacts are provided by Cys10, Cys13, Cys29, Cys30, His49, His69, His75, Cys117, and His120.

Belongs to the desulfoferrodoxin family. Fe(3+) serves as cofactor. The cofactor is Cu(2+).

In Methanothermobacter thermautotrophicus (strain ATCC 29096 / DSM 1053 / JCM 10044 / NBRC 100330 / Delta H) (Methanobacterium thermoautotrophicum), this protein is Desulfoferrodoxin homolog.